Reading from the N-terminus, the 38-residue chain is MAKRGFNCLLLSISEIDLPVKRLESPNKTRRPYGASIY.

In terms of tissue distribution, in the testis, expressed in Leydig cells at 10, 20 and 60 days of age (at protein level). Also expressed in pachytene spermatocytes at day 20 and in vessels, peritubular cells and spermatids at day 60. Not detected in Sertoli cells (at protein level). In the adult ovary, expressed in stromal cells, granulosa cells, theca cells and oocytes at diestrus and proestrus (at protein level). Expressed in the anterior pituitary where it is detected in lactotropes and somatotropes with lower levels in females than males (at protein level). In the hippocampus, expressed in astrocytes but not in neurons or oligodendrocytes (at protein level). Expressed in muscle, liver and hypothalamus but not in epididymal fat (at protein level). Widely expressed with highest levels in cardiac and skeletal muscle and lowest levels in lung, testis and uterus. In the CNS, levels are relatively high in the cerebellum and cortex and low in the hippocampus. In the hippocampus, lower levels are detected in ovariectomized animals than in controls.

Its subcellular location is the mitochondrion. The protein resides in the secreted. It is found in the cytoplasm. In terms of biological role, plays a role as a neuroprotective factor. Protects against neuronal cell death induced by amyloid-beta peptides. Also protects against excitotoxic cell death. Prevents amyloid-beta peptide-induced spatial learning and memory impairments, protects against amyloid-beta peptide-induced suppression of hippocampal long-term potentiation, and inhibits amyloid-beta peptide-induced activation of STAT3 and inhibition of CASP3. Prevents glutamate-induced dendritic atrophy in hippocampal neurons and also prevents glutamate-induced decrease in SYP puncta number and total puncta area. Protects anterior pituitary cells from TNF-induced apoptosis. Plays a role in ovarian follicle development by acting as a cryoprotective factor for granulosa cells in the antral follicle. Increases androgen production in Leydig cells and promotes Leydig cell survival by preventing apoptosis. This chain is Humanin-like protein, found in Rattus norvegicus (Rat).